The chain runs to 132 residues: Small ribosomal subunit protein uS8 (132 aa).

It belongs to the universal ribosomal protein uS8 family. In terms of assembly, part of the 30S ribosomal subunit. Contacts proteins S5 and S12.

Functionally, one of the primary rRNA binding proteins, it binds directly to 16S rRNA central domain where it helps coordinate assembly of the platform of the 30S subunit. The protein is Small ribosomal subunit protein uS8 of Rhodospirillum centenum (strain ATCC 51521 / SW).